The following is a 61-amino-acid chain: Small ribosomal subunit protein uS14 (61 aa).

Residues Cys24, Cys27, Cys40, and Cys43 each coordinate Zn(2+).

The protein belongs to the universal ribosomal protein uS14 family. Zinc-binding uS14 subfamily. In terms of assembly, part of the 30S ribosomal subunit. Contacts proteins S3 and S10. Zn(2+) is required as a cofactor.

Binds 16S rRNA, required for the assembly of 30S particles and may also be responsible for determining the conformation of the 16S rRNA at the A site. This Leptospira biflexa serovar Patoc (strain Patoc 1 / Ames) protein is Small ribosomal subunit protein uS14.